A 366-amino-acid polypeptide reads, in one-letter code: Ribosomal RNA large subunit methyltransferase M (366 aa).

S-adenosyl-L-methionine is bound by residues Ser-188, 221–224 (CPGG), Asp-240, Asp-260, and Asp-277. Lys-306 functions as the Proton acceptor in the catalytic mechanism.

It belongs to the class I-like SAM-binding methyltransferase superfamily. RNA methyltransferase RlmE family. RlmM subfamily. Monomer.

It localises to the cytoplasm. The enzyme catalyses cytidine(2498) in 23S rRNA + S-adenosyl-L-methionine = 2'-O-methylcytidine(2498) in 23S rRNA + S-adenosyl-L-homocysteine + H(+). Catalyzes the 2'-O-methylation at nucleotide C2498 in 23S rRNA. The sequence is that of Ribosomal RNA large subunit methyltransferase M from Photorhabdus sp. (strain Az29).